The sequence spans 226 residues: Fibrillarin-like rRNA/tRNA 2'-O-methyltransferase (226 aa).

S-adenosyl-L-methionine-binding positions include 85–86, 104–105, 129–130, and 149–152; these read TT, EF, DA, and DVAQ.

Belongs to the methyltransferase superfamily. Fibrillarin family. Interacts with nop5. Component of box C/D small ribonucleoprotein (sRNP) particles that contain rpl7ae, FlpA and nop5, plus a guide RNA.

Functionally, involved in pre-rRNA and tRNA processing. Utilizes the methyl donor S-adenosyl-L-methionine to catalyze the site-specific 2'-hydroxyl methylation of ribose moieties in rRNA and tRNA. Site specificity is provided by a guide RNA that base pairs with the substrate. Methylation occurs at a characteristic distance from the sequence involved in base pairing with the guide RNA. The protein is Fibrillarin-like rRNA/tRNA 2'-O-methyltransferase of Thermococcus onnurineus (strain NA1).